Here is a 270-residue protein sequence, read N- to C-terminus: Myeloid leukemia factor 1 (270 aa).

Phosphoserine is present on residues Ser6, Ser8, Ser32, and Ser34. Positions 50 to 125 (RARNRMGHED…VGDEPPKVFQ (76 aa)) are interaction with COPS3. 2 disordered regions span residues 127-148 (STQT…RDSD) and 221-247 (RSVA…AIEH). Basic and acidic residues predominate over residues 138-148 (KETRKALRDSD).

The protein belongs to the MLF family. Interacts with CENPU. Also interacts with NRBP1/MADM, YWHAZ/14-3-3-zeta and HNRPUL2/MANP. NRBP1 recruits a serine kinase which phosphorylates both itself and MLF1. Phosphorylated MLF1 then binds to YWHAZ and is retained in the cytoplasm. Retained in the nucleus by binding to HNRPUL2. Binds to COPS3/CSN3 which is required for suppression of COP1 and activation of p53. Phosphorylation is required for binding to YWHAZ.

The protein localises to the cytoplasm. The protein resides in the nucleus. It localises to the cell projection. Its subcellular location is the cilium. It is found in the cytoskeleton. The protein localises to the cilium basal body. In terms of biological role, involved in lineage commitment of primary hemopoietic progenitors by restricting erythroid formation and enhancing myeloid formation. Interferes with erythropoietin-induced erythroid terminal differentiation by preventing cells from exiting the cell cycle through suppression of CDKN1B/p27Kip1 levels. Suppresses COP1 activity via CSN3 which activates p53 and induces cell cycle arrest. Binds DNA and affects the expression of a number of genes so may function as a transcription factor in the nucleus. The polypeptide is Myeloid leukemia factor 1 (MLF1) (Bos taurus (Bovine)).